The chain runs to 393 residues: LL-diaminopimelate aminotransferase (393 aa).

Residues Tyr14 and Gly41 each contribute to the substrate site. Residues Tyr71, 104–105 (AK), Tyr128, Asn174, Tyr205, and 233–235 (SFS) contribute to the pyridoxal 5'-phosphate site. The substrate site is built by Lys105, Tyr128, and Asn174. Lys236 carries the post-translational modification N6-(pyridoxal phosphate)lysine. Positions 244 and 275 each coordinate pyridoxal 5'-phosphate. The substrate site is built by Asn275 and Arg369.

It belongs to the class-I pyridoxal-phosphate-dependent aminotransferase family. LL-diaminopimelate aminotransferase subfamily. In terms of assembly, homodimer. The cofactor is pyridoxal 5'-phosphate.

The enzyme catalyses (2S,6S)-2,6-diaminopimelate + 2-oxoglutarate = (S)-2,3,4,5-tetrahydrodipicolinate + L-glutamate + H2O + H(+). It functions in the pathway amino-acid biosynthesis; L-lysine biosynthesis via DAP pathway; LL-2,6-diaminopimelate from (S)-tetrahydrodipicolinate (aminotransferase route): step 1/1. In terms of biological role, involved in the synthesis of meso-diaminopimelate (m-DAP or DL-DAP), required for both lysine and peptidoglycan biosynthesis. Catalyzes the direct conversion of tetrahydrodipicolinate to LL-diaminopimelate. In Chlamydia muridarum (strain MoPn / Nigg), this protein is LL-diaminopimelate aminotransferase.